The primary structure comprises 448 residues: Tubulin alpha chain (448 aa).

The GTP site is built by Gln12, Glu73, Ser142, Gly146, Thr147, Thr181, Asn208, and Asn230. Glu73 is a binding site for Mg(2+). Residue Glu256 is part of the active site.

Belongs to the tubulin family. Dimer of alpha and beta chains. A typical microtubule is a hollow water-filled tube with an outer diameter of 25 nm and an inner diameter of 15 nM. Alpha-beta heterodimers associate head-to-tail to form protofilaments running lengthwise along the microtubule wall with the beta-tubulin subunit facing the microtubule plus end conferring a structural polarity. Microtubules usually have 13 protofilaments but different protofilament numbers can be found in some organisms and specialized cells. Mg(2+) is required as a cofactor.

The protein resides in the cytoplasm. The protein localises to the cytoskeleton. The enzyme catalyses GTP + H2O = GDP + phosphate + H(+). Functionally, tubulin is the major constituent of microtubules, a cylinder consisting of laterally associated linear protofilaments composed of alpha- and beta-tubulin heterodimers. Microtubules grow by the addition of GTP-tubulin dimers to the microtubule end, where a stabilizing cap forms. Below the cap, tubulin dimers are in GDP-bound state, owing to GTPase activity of alpha-tubulin. The protein is Tubulin alpha chain (TUB1) of Eremothecium gossypii (strain ATCC 10895 / CBS 109.51 / FGSC 9923 / NRRL Y-1056) (Yeast).